We begin with the raw amino-acid sequence, 380 residues long: Ceramide synthase 2 (380 aa).

Topologically, residues 1–40 (MLQTLYDYFWWERLWLPVNLTWADLEDKDGRVYAKASDLY) are lumenal. Asparagine 19 carries N-linked (GlcNAc...) asparagine glycosylation. The helical transmembrane segment at 41–61 (ITLPLALLFLVIRYFFELYVA) threads the bilayer. Positions 67–128 (LLNVKEKTRL…RRRRNQDRPS (62 aa)) are homeobox-like. The region spanning 131-332 (KKFREASWRF…ILRMAHKFIT (202 aa)) is the TLC domain. Transmembrane regions (helical) follow at residues 140-160 (FTYYLIAFVAGMAVTVDKPWF), 175-195 (IIPSQYWYYMIELSFYWSLLF), 209-229 (QIIHHVATIILLCFSWFANYV), and 264-284 (LFIVFAIVFIITRLVIMPFWI). Positions 291–300 (YPLELYPAFF) match the Last loop motif motif. A helical transmembrane segment spans residues 304–324 (FFNFMMAVLQMLHIFWAYFIL). The Cytoplasmic portion of the chain corresponds to 325–380 (RMAHKFITGKLIEDERSDREETESSEGEETAAGAGAKSRLLANGHPILNNNHPKND). The disordered stretch occupies residues 340-380 (RSDREETESSEGEETAAGAGAKSRLLANGHPILNNNHPKND). A Phosphoserine modification is found at serine 341. Residues 344–353 (EETESSEGEE) are compositionally biased toward acidic residues. At threonine 346 the chain carries Phosphothreonine. Serine 348 and serine 349 each carry phosphoserine.

As to quaternary structure, interacts with ATP6V0C, ASGR1, ASGR2 and SLC22A1/OCT1. Interacts with ELOV1, HSD17B12 and TECR. Interacts with NDUFS2. Interacts with PAQR4; the interaction regulates the stability and activity of CERS2 and is inhibited in presence of ceramides. In terms of processing, acetylated. Deacetylation by SIRT3 increases enzyme activity and promotes mitochondrial ceramide accumulation. Post-translationally, phosphorylated at the C-terminus by CK2, leading to increase the ceramide synthase activity. As to expression, broadly expressed, with highest levels in liver and kidney. In brain is detected in neurons, oligodentrocytes, ependymal cells and epithelial cells of the choroid plexus. In kidney is detected in collecting ducts and to a lesser degree in proximal tubules.

The protein localises to the endoplasmic reticulum membrane. The enzyme catalyses a very long-chain fatty acyl-CoA + a sphingoid base = an N-(very-long-chain fatty acyl)-sphingoid base + CoA + H(+). The catalysed reaction is docosanoyl-CoA + sphinganine = N-docosanoylsphinganine + CoA + H(+). It carries out the reaction tetracosanoyl-CoA + sphinganine = N-tetracosanoylsphinganine + CoA + H(+). It catalyses the reaction hexacosanoyl-CoA + sphinganine = N-hexacosanoylsphinganine + CoA + H(+). The enzyme catalyses (15Z)-tetracosenoyl-CoA + sphinganine = N-(15Z-tetracosenoyl)-sphinganine + CoA + H(+). The catalysed reaction is 2-hydroxytetracosanoyl-CoA + sphinganine = N-(2-hydroxytetracosanoyl)-sphinganine + CoA + H(+). It carries out the reaction 2-hydroxydocosanoyl-CoA + sphinganine = N-(2-hydroxydocosanoyl)-sphinganine + CoA + H(+). It catalyses the reaction 2-hydroxytetracosenoyl-CoA + sphinganine = N-(2-hydroxytetracosenoyl)-sphinganine + CoA + H(+). The enzyme catalyses tetracosenoyl-CoA + sphinganine = an N-tetracosenoylsphinganine + CoA + H(+). The catalysed reaction is hexacosenoyl-CoA + sphinganine = N-hexacosenoylsphinganine + CoA + H(+). It carries out the reaction tetracosanoyl-CoA + sphing-4-enine = N-tetracosanoyl-sphing-4-enine + CoA + H(+). It catalyses the reaction tetracosenoyl-CoA + sphing-4-enine = N-(tetracosenoyl)-sphing-4-enine + CoA + H(+). The enzyme catalyses heptadecasphing-4-enine + tetracosanoyl-CoA = N-tetracosanoyl-heptadecasphing-4-enine + CoA + H(+). The catalysed reaction is a fatty acyl-CoA + sphing-4-enine = an N-acylsphing-4-enine + CoA + H(+). It carries out the reaction sphing-4-enine + hexadecanoyl-CoA = N-hexadecanoylsphing-4-enine + CoA + H(+). It catalyses the reaction sphing-4-enine + octadecanoyl-CoA = N-octadecanoylsphing-4-enine + CoA + H(+). The enzyme catalyses eicosanoyl-CoA + sphing-4-enine = N-eicosanoyl-sphing-4-enine + CoA + H(+). The catalysed reaction is sphinganine + hexadecanoyl-CoA = N-hexadecanoylsphinganine + CoA + H(+). It carries out the reaction sphinganine + octadecanoyl-CoA = N-(octadecanoyl)-sphinganine + CoA + H(+). It catalyses the reaction sphinganine + (9Z)-octadecenoyl-CoA = N-(9Z-octadecenoyl)-sphinganine + CoA + H(+). The enzyme catalyses eicosanoyl-CoA + sphinganine = N-eicosanoylsphinganine + CoA + H(+). The protein operates within lipid metabolism; sphingolipid metabolism. Ceramide synthase activity is inhibited by sphingosine-1-phosphate. Ceramide synthase that catalyzes the transfer of the acyl chain from acyl-CoA to a sphingoid base, with high selectivity toward very-long-chain fatty acyl-CoA (chain length C22-C27). N-acylates sphinganine and sphingosine bases to form dihydroceramides and ceramides in de novo synthesis and salvage pathways, respectively. Plays a non-redundant role in the synthesis of ceramides with very-long-chain fatty acids in kidney, liver and brain. Regulates the abundance of myelin-specific sphingolipids galactosylceramide and sulfatide that affects myelin sheath architecture and motor neuron functions. The polypeptide is Ceramide synthase 2 (Mus musculus (Mouse)).